A 255-amino-acid chain; its full sequence is 4-hydroxy-tetrahydrodipicolinate reductase (255 aa).

NAD(+)-binding positions include 9–14, D35, 89–91, and 115–118; these read GFKGKM, GTT, and APNF. The active-site Proton donor/acceptor is the H145. Residue H146 participates in (S)-2,3,4,5-tetrahydrodipicolinate binding. The Proton donor role is filled by K149. 155 to 156 contributes to the (S)-2,3,4,5-tetrahydrodipicolinate binding site; it reads GT.

The protein belongs to the DapB family.

Its subcellular location is the cytoplasm. It carries out the reaction (S)-2,3,4,5-tetrahydrodipicolinate + NAD(+) + H2O = (2S,4S)-4-hydroxy-2,3,4,5-tetrahydrodipicolinate + NADH + H(+). The catalysed reaction is (S)-2,3,4,5-tetrahydrodipicolinate + NADP(+) + H2O = (2S,4S)-4-hydroxy-2,3,4,5-tetrahydrodipicolinate + NADPH + H(+). Its pathway is amino-acid biosynthesis; L-lysine biosynthesis via DAP pathway; (S)-tetrahydrodipicolinate from L-aspartate: step 4/4. Its function is as follows. Catalyzes the conversion of 4-hydroxy-tetrahydrodipicolinate (HTPA) to tetrahydrodipicolinate. The sequence is that of 4-hydroxy-tetrahydrodipicolinate reductase from Streptococcus pneumoniae serotype 4 (strain ATCC BAA-334 / TIGR4).